The following is an 881-amino-acid chain: Envelope glycoprotein gp160 (881 aa).

A signal peptide spans 1–22; that stretch reads MGCLKNQLLIAILLLSVYGIYC. Residues 23 to 696 lie on the Extracellular side of the membrane; the sequence is TQYVTVFYGV…ASWIKYIQYG (674 aa). Asn-37 is a glycosylation site (N-linked (GlcNAc...) asparagine; by host). Cys-44 and Cys-57 are joined by a disulfide. Asn-70, Asn-114, Asn-148, Asn-158, Asn-173, Asn-186, Asn-200, Asn-204, Asn-214, Asn-246, Asn-249, Asn-280, Asn-286, Asn-297, Asn-308, Asn-318, Asn-373, and Asn-379 each carry an N-linked (GlcNAc...) asparagine; by host glycan. 5 disulfide bridges follow: Cys-101/Cys-222, Cys-108/Cys-213, Cys-113/Cys-170, Cys-235/Cys-265, and Cys-245/Cys-257. A V1 region spans residues 113 to 169; the sequence is CNKSETDRWGLTKSSTTITTAAPTSAPVSEKLDMVNETSSCIAQNNCTGLEQEQMIS. The interval 170-213 is V2; it reads CKFNMTGLKRDKTKEYNETWYSTDLVCEQRNSTDNESRCYMNHC. Residues 313-345 form a V3 region; that stretch reads CRRPGNKTVLPVTIMSELVFHSQPINDRPKQAW. Cys-313 and Cys-346 are joined by a disulfide. Disulfide bonds link Cys-397–Cys-461 and Cys-404–Cys-434. The segment at 404-434 is V4; it reads CKMNWFLNWVEDKDVTTQRPKERHRKNYVPC. N-linked (GlcNAc...) asparagine; by host glycosylation is found at Asn-462 and Asn-478. The segment at 477–484 is V5; the sequence is GNQTSITM. A fusion peptide region spans residues 528 to 548; it reads GVFVLGFLGFLATAGSAIGAV. The immunosuppression stretch occupies residues 591 to 607; that stretch reads LQTKVTAIEKYLKDQAQ. Residues Asn-627, Asn-636, and Asn-652 are each glycosylated (N-linked (GlcNAc...) asparagine; by host). Residues 636–668 are a coiled coil; sequence NDTWQEWERKVDFLEENITALLEEAQIQQEKNM. An MPER; binding to GalCer region spans residues 673 to 694; that stretch reads KLNSWDVFGNWFDLASWIKYIQ. Residues 697-717 traverse the membrane as a helical segment; the sequence is IYVVVGVILLRIVIYIVQMLA. Residues 718–881 lie on the Cytoplasmic side of the membrane; it reads KLRQGYRPVF…IRQGLELTLL (164 aa). Residues 723-726 carry the YXXV motif; contains endocytosis signal motif; that stretch reads YRPV. The segment at 737–761 is disordered; it reads THTQQDPALPTREGKEGDGGEGGGN. A lipid anchor (S-palmitoyl cysteine; by host) is attached at Cys-789. The short motif at 880 to 881 is the Di-leucine internalization motif element; it reads LL.

As to quaternary structure, the mature envelope protein (Env) consists of a homotrimer of non-covalently associated gp120-gp41 heterodimers. The resulting complex protrudes from the virus surface as a spike. Interacts with host CD4 and CCR5. Gp120 also interacts with the C-type lectins CD209/DC-SIGN and CLEC4M/DC-SIGNR (collectively referred to as DC-SIGN(R)). In terms of assembly, the mature envelope protein (Env) consists of a homotrimer of non-covalently associated gp120-gp41 heterodimers. The resulting complex protrudes from the virus surface as a spike. Post-translationally, specific enzymatic cleavages in vivo yield mature proteins. Envelope glycoproteins are synthesized as an inactive precursor that is heavily N-glycosylated and processed likely by host cell furin in the Golgi to yield the mature SU and TM proteins. The cleavage site between SU and TM requires the minimal sequence [KR]-X-[KR]-R. Palmitoylation of the transmembrane protein and of Env polyprotein (prior to its proteolytic cleavage) is essential for their association with host cell membrane lipid rafts. Palmitoylation is therefore required for envelope trafficking to classical lipid rafts, but not for viral replication.

It is found in the virion membrane. The protein resides in the host cell membrane. The protein localises to the host endosome membrane. The surface protein gp120 (SU) attaches the virus to the host lymphoid cell by binding to the primary receptor CD4. This interaction induces a structural rearrangement creating a high affinity binding site for a chemokine coreceptor like CCR5. This peculiar 2 stage receptor-interaction strategy allows gp120 to maintain the highly conserved coreceptor-binding site in a cryptic conformation, protected from neutralizing antibodies. These changes are transmitted to the transmembrane protein gp41 and are thought to activate its fusogenic potential by unmasking its fusion peptide. Functionally, surface protein gp120 (SU) may target the virus to gut-associated lymphoid tissue (GALT) by binding host ITGA4/ITGB7 (alpha-4/beta-7 integrins), a complex that mediates T-cell migration to the GALT. Interaction between gp120 and ITGA4/ITGB7 would allow the virus to enter GALT early in the infection, infecting and killing most of GALT's resting CD4+ T-cells. This T-cell depletion is believed to be the major insult to the host immune system leading to AIDS. Its function is as follows. The surface protein gp120 is a ligand for CD209/DC-SIGN and CLEC4M/DC-SIGNR, which are respectively found on dendritic cells (DCs), and on endothelial cells of liver sinusoids and lymph node sinuses. These interactions allow capture of viral particles at mucosal surfaces by these cells and subsequent transmission to permissive cells. DCs are professional antigen presenting cells, critical for host immunity by inducing specific immune responses against a broad variety of pathogens. They act as sentinels in various tissues where they take up antigen, process it, and present it to T-cells following migration to lymphoid organs. SIV subverts the migration properties of dendritic cells to gain access to CD4+ T-cells in lymph nodes. Virus transmission to permissive T-cells occurs either in trans (without DCs infection, through viral capture and transmission), or in cis (following DCs productive infection, through the usual CD4-gp120 interaction), thereby inducing a robust infection. In trans infection, bound virions remain infectious over days and it is proposed that they are not degraded, but protected in non-lysosomal acidic organelles within the DCs close to the cell membrane thus contributing to the viral infectious potential during DCs' migration from the periphery to the lymphoid tissues. On arrival at lymphoid tissues, intact virions recycle back to DCs' cell surface allowing virus transmission to CD4+ T-cells. Virion capture also seems to lead to MHC-II-restricted viral antigen presentation, and probably to the activation of SIV-specific CD4+ cells. In terms of biological role, the transmembrane protein gp41 (TM) acts as a class I viral fusion protein. Under the current model, the protein has at least 3 conformational states: pre-fusion native state, pre-hairpin intermediate state, and post-fusion hairpin state. During fusion of viral and target intracellular membranes, the coiled coil regions (heptad repeats) assume a trimer-of-hairpins structure, positioning the fusion peptide in close proximity to the C-terminal region of the ectodomain. The formation of this structure appears to drive apposition and subsequent fusion of viral and target cell membranes. Complete fusion occurs in host cell endosomes. The virus undergoes clathrin-dependent internalization long before endosomal fusion, thus minimizing the surface exposure of conserved viral epitopes during fusion and reducing the efficacy of inhibitors targeting these epitopes. Membranes fusion leads to delivery of the nucleocapsid into the cytoplasm. The envelope glycoprotein gp160 precursor down-modulates cell surface CD4 antigen by interacting with it in the endoplasmic reticulum and blocking its transport to the cell surface. Functionally, the gp120-gp41 heterodimer allows rapid transcytosis of the virus through CD4 negative cells such as simple epithelial monolayers of the intestinal, rectal and endocervical epithelial barriers. Both gp120 and gp41 specifically recognize glycosphingolipids galactosyl-ceramide (GalCer) or 3' sulfo-galactosyl-ceramide (GalS) present in the lipid rafts structures of epithelial cells. Binding to these alternative receptors allows the rapid transcytosis of the virus through the epithelial cells. This transcytotic vesicle-mediated transport of virions from the apical side to the basolateral side of the epithelial cells does not involve infection of the cells themselves. The polypeptide is Envelope glycoprotein gp160 (env) (Simian immunodeficiency virus (isolate K78) (SIV-mac)).